Here is an 83-residue protein sequence, read N- to C-terminus: Cell division protein ZapB (83 aa).

A coiled-coil region spans residues 7–80 (EMLEKLEAKV…RVRTLLGKMD (74 aa)).

The protein belongs to the ZapB family. Homodimer. The ends of the coiled-coil dimer bind to each other, forming polymers. Interacts with FtsZ.

It localises to the cytoplasm. In terms of biological role, non-essential, abundant cell division factor that is required for proper Z-ring formation. It is recruited early to the divisome by direct interaction with FtsZ, stimulating Z-ring assembly and thereby promoting cell division earlier in the cell cycle. Its recruitment to the Z-ring requires functional FtsA or ZipA. This is Cell division protein ZapB from Photobacterium profundum (strain SS9).